Reading from the N-terminus, the 534-residue chain is Arginine--tRNA ligase (534 aa).

Positions 120 to 130 (ANPTGFLHLGH) match the 'HIGH' region motif.

The protein belongs to the class-I aminoacyl-tRNA synthetase family. As to quaternary structure, monomer.

The protein resides in the cytoplasm. The enzyme catalyses tRNA(Arg) + L-arginine + ATP = L-arginyl-tRNA(Arg) + AMP + diphosphate. In Mesomycoplasma hyopneumoniae (strain 7448) (Mycoplasma hyopneumoniae), this protein is Arginine--tRNA ligase.